A 1165-amino-acid polypeptide reads, in one-letter code: Vacuolar segregation protein 7 (1165 aa).

Residues 1–919 (MTEEDRKLTV…RKSPFVKVKN (919 aa)) are Cytoplasmic-facing. The interval 118–147 (SVSSTNNNSNNALINHNPLSSHLSNPSSSL) is disordered. Residue serine 164 is modified to Phosphoserine. Disordered regions lie at residues 215 to 241 (SNNTAPSTSNNIGSNTPPAPLLPLPSL), 274 to 423 (KAKN…SEKP), 461 to 497 (LIFPDSSSQQQQQQQQPPKQQQQQQNHGITSKISAPL), and 560 to 668 (EPPH…KRPL). The segment covering 216–230 (NNTAPSTSNNIGSNT) has biased composition (polar residues). The segment covering 334 to 345 (TTSTKTAPSTAP) has biased composition (low complexity). The segment covering 346–367 (LGSTDNTQALTASVSSSNADNH) has biased composition (polar residues). A compositionally biased stretch (low complexity) spans 375–391 (SSNNNGNNSNSASNKTN). Residues 393 to 412 (DIKNSNADLSASTSNNNAIN) are compositionally biased toward polar residues. Over residues 413–423 (DDSHESNSEKP) the composition is skewed to basic and acidic residues. 2 stretches are compositionally biased toward low complexity: residues 469–485 (QQQQQQQQPPKQQQQQQ) and 562–571 (PHQLQQQQPP). A compositionally biased stretch (polar residues) spans 576-587 (SVDSYTSDNPDS). Residues 599–613 (SLVSLSKVSPHLLSS) show a composition bias toward low complexity. The segment covering 614 to 662 (TSSNGNTISCPNVATNSQELEPNNDISTKKSLSNSTLRHSSANRNSNYG) has biased composition (polar residues). The helical; Signal-anchor for type II membrane protein transmembrane segment at 920-940 (FLYLAFVISSLLMTGFILGFL) threads the bilayer. The Vacuolar segment spans residues 941–1165 (LATNKELQDV…KDSMVHPGKK (225 aa)). N-linked (GlcNAc...) asparagine glycosylation is found at asparagine 1020 and asparagine 1099. Positions 1074–1121 (SPGSREAKHENDDDDDDDGDDGDDENNTNERQYKSKPNARDDKEDDTK) are disordered. Over residues 1085–1100 (DDDDDDDGDDGDDENN) the composition is skewed to acidic residues. Residues 1111 to 1121 (NARDDKEDDTK) show a composition bias toward basic and acidic residues.

In terms of assembly, component of the PI(3,5)P2 regulatory complex, composed of ATG18, FIG4, FAB1, VAC14 and VAC7. VAC14 nucleates the assembly of the complex and serves as a scaffold. In terms of processing, N-glycosylated.

The protein localises to the vacuole membrane. Functionally, the PI(3,5)P2 regulatory complex regulates both the synthesis and turnover of phosphatidylinositol 3,5-bisphosphate (PtdIns(3,5)P2). Positively regulates FAB1 kinase activity. Major activator of FAB1 during hyperosmotic shock and can elevate levels of PtdIns(3,5)P2 in the absence of VAC14 and FIG4. Directly involved in vacuolar membrane scission. Required for normal vacuole acidification, inheritance and morphology. This chain is Vacuolar segregation protein 7 (VAC7), found in Saccharomyces cerevisiae (strain ATCC 204508 / S288c) (Baker's yeast).